We begin with the raw amino-acid sequence, 564 residues long: O-fucosyltransferase 5 (564 aa).

Residues 1–28 are disordered; the sequence is MVRNSSDEEEDHRNLIPQNDTRDNDLNL. A helical; Signal-anchor for type II membrane protein membrane pass occupies residues 70–90; it reads YVVAAVSLTLFVGLLFLFTDT. N-linked (GlcNAc...) asparagine glycosylation is found at asparagine 129, asparagine 134, and asparagine 174. Substrate is bound by residues 413 to 415 and 529 to 530; these read HLR and TF.

Belongs to the glycosyltransferase GT106 family.

The protein resides in the membrane. The protein operates within glycan metabolism. This Arabidopsis thaliana (Mouse-ear cress) protein is O-fucosyltransferase 5.